The primary structure comprises 242 residues: Placenta-expressed transcript 1 protein (242 aa).

The signal sequence occupies residues 1–26 (MAVLRSLLPQLGLFLCLALCFSPALS). N-linked (GlcNAc...) asparagine glycosylation is found at Asn-47, Asn-56, and Asn-66. Residue Ser-223 is the site of GPI-anchor amidated serine attachment. The propeptide at 224-242 (PLAGALHILLVFLISKLLF) is removed in mature form.

In terms of processing, N-glycosylated. Post-translationally, GPI-anchored. As to expression, present at high level in the dermal sheath cells near the bulge area of the hair follicle and in the differentiated sebocytes of the normal adult skin (at protein level).

It localises to the apical cell membrane. Modulates leading keratinocyte migration and cellular adhesion to matrix proteins during a wound-healing response and promotes wound repair. May play a role during trichilemmal differentiation of the hair follicle. This is Placenta-expressed transcript 1 protein (PLET1) from Mesocricetus auratus (Golden hamster).